Consider the following 1048-residue polypeptide: Anguibactin system regulator (1048 aa).

In terms of domain architecture, Carrier spans 965-1039; that stretch reads PIITASEDRV…AFAIIMDRCR (75 aa).

It belongs to the ATP-dependent AMP-binding enzyme family.

The protein operates within siderophore biosynthesis; anguibactin biosynthesis. Bifunctional protein that plays an essential role in virulence. Plays a role in both the production of the siderophore anguibactin and the regulation of iron transport genes. This chain is Anguibactin system regulator (angR), found in Vibrio anguillarum (Listonella anguillarum).